Here is a 279-residue protein sequence, read N- to C-terminus: Reaction center protein L chain (279 aa).

3 helical membrane passes run glycine 33 to glutamine 56, glycine 85 to glycine 113, and tyrosine 116 to glycine 141. Positions 154 and 174 each coordinate (7R,8Z)-bacteriochlorophyll b. The helical transmembrane segment at asparagine 171–asparagine 200 threads the bilayer. Fe cation is bound at residue histidine 191. Phenylalanine 217 contributes to the a ubiquinone binding site. Residues glycine 226 to serine 252 traverse the membrane as a helical segment. Residue histidine 231 participates in Fe cation binding.

Belongs to the reaction center PufL/M/PsbA/D family. As to quaternary structure, reaction center is composed of four bacteriochlorophylls, two bacteriopheophytins, two ubiquinones, one iron, and three highly hydrophobic polypeptide chains (designated L, M, and H).

Its subcellular location is the cell inner membrane. In terms of biological role, the reaction center is a membrane-bound complex that mediates the initial photochemical event in the electron transfer process of photosynthesis. The protein is Reaction center protein L chain (pufL) of Rubrivivax gelatinosus (strain NBRC 100245 / IL144).